The following is an 856-amino-acid chain: Cyclic di-GMP phosphodiesterase PdeB (856 aa).

The next 2 membrane-spanning stretches (helical) occupy residues 7-27 (ILVF…YCLG) and 230-250 (WVSL…YVWL). One can recognise a PAS domain in the interval 303 to 350 (QKERGKITLESIAEAVILTDIEAKVIYMNPKAETLLEVASSNAVGESL). In terms of domain architecture, GGDEF spans 454 to 587 (RSLAVCYLDL…GTNQIHIYDD (134 aa)). Positions 598-852 (APKWAVRIAQ…SYCEQFETRL (255 aa)) constitute an EAL domain.

Its subcellular location is the cell membrane. The catalysed reaction is 3',3'-c-di-GMP + H2O = 5'-phosphoguanylyl(3'-&gt;5')guanosine + H(+). In terms of biological role, affects motility and biofilm formation, and is linked to the regulation of sulfate uptake and assimilation. This Shewanella oneidensis (strain ATCC 700550 / JCM 31522 / CIP 106686 / LMG 19005 / NCIMB 14063 / MR-1) protein is Cyclic di-GMP phosphodiesterase PdeB (pdeB).